Here is a 187-residue protein sequence, read N- to C-terminus: Holliday junction branch migration complex subunit RuvA (187 aa).

The tract at residues 1-64 is domain I; that stretch reads MIEYIRGIIE…EDGFQIFGFK (64 aa). Residues 65 to 136 are domain II; the sequence is RKEELELFEK…ELKDKVPKEV (72 aa). The interval 136 to 139 is flexible linker; it reads VVVP. Positions 140–187 are domain III; it reads KEDSLLNEALEALLALGYTKSEAIYALSDVNCESVEQAVKEALKKLAK.

The protein belongs to the RuvA family. As to quaternary structure, homotetramer. Forms an RuvA(8)-RuvB(12)-Holliday junction (HJ) complex. HJ DNA is sandwiched between 2 RuvA tetramers; dsDNA enters through RuvA and exits via RuvB. An RuvB hexamer assembles on each DNA strand where it exits the tetramer. Each RuvB hexamer is contacted by two RuvA subunits (via domain III) on 2 adjacent RuvB subunits; this complex drives branch migration. In the full resolvosome a probable DNA-RuvA(4)-RuvB(12)-RuvC(2) complex forms which resolves the HJ.

It localises to the cytoplasm. Its function is as follows. The RuvA-RuvB-RuvC complex processes Holliday junction (HJ) DNA during genetic recombination and DNA repair, while the RuvA-RuvB complex plays an important role in the rescue of blocked DNA replication forks via replication fork reversal (RFR). RuvA specifically binds to HJ cruciform DNA, conferring on it an open structure. The RuvB hexamer acts as an ATP-dependent pump, pulling dsDNA into and through the RuvAB complex. HJ branch migration allows RuvC to scan DNA until it finds its consensus sequence, where it cleaves and resolves the cruciform DNA. This is Holliday junction branch migration complex subunit RuvA from Caldanaerobacter subterraneus subsp. tengcongensis (strain DSM 15242 / JCM 11007 / NBRC 100824 / MB4) (Thermoanaerobacter tengcongensis).